A 529-amino-acid chain; its full sequence is Type I restriction enzyme StySJI methylase subunit (529 aa).

S-adenosyl-L-methionine contacts are provided by residues Gln148–Arg153, Thr178–Gly180, and Glu216. The tract at residues Tyr405–Thr444 is disordered. A compositionally biased stretch (basic and acidic residues) spans Glu407–Gly418.

The protein belongs to the N(4)/N(6)-methyltransferase family. The type I restriction/modification system is composed of three polypeptides R, M and S; the restriction enzyme has stoichiometry R(2)M(2)S(1) while the methyltransferase is M(2)S(1).

It carries out the reaction a 2'-deoxyadenosine in DNA + S-adenosyl-L-methionine = an N(6)-methyl-2'-deoxyadenosine in DNA + S-adenosyl-L-homocysteine + H(+). Functionally, the subtype gamma methyltransferase (M) subunit of a type I restriction enzyme. The M and S subunits together form a methyltransferase (MTase) that methylates two adenine residues of the sequence 5'-GAGN(6)GTRC-3'. In the presence of the R subunit the complex can also act as an endonuclease, binding to the same target sequence but cutting the DNA some distance from this site. Whether the DNA is cut or modified depends on the methylation state of the target sequence. When the target site is unmodified, the DNA is cut. When the target site is hemimethylated, the complex acts as a maintenance MTase modifying the DNA so that both strands become methylated. After locating a non-methylated recognition site, the enzyme complex serves as a molecular motor that translocates DNA in an ATP-dependent manner until a collision occurs that triggers cleavage. In Salmonella typhimurium (strain LT2 / SGSC1412 / ATCC 700720), this protein is Type I restriction enzyme StySJI methylase subunit.